Here is a 138-residue protein sequence, read N- to C-terminus: Small ribosomal subunit protein uS11 (138 aa).

This sequence belongs to the universal ribosomal protein uS11 family. As to quaternary structure, part of the 30S ribosomal subunit.

In terms of biological role, located on the platform of the 30S subunit. The polypeptide is Small ribosomal subunit protein uS11 (Pyrobaculum arsenaticum (strain DSM 13514 / JCM 11321 / PZ6)).